A 334-amino-acid polypeptide reads, in one-letter code: Anthranilate phosphoribosyltransferase (334 aa).

5-phospho-alpha-D-ribose 1-diphosphate-binding positions include G79, 82–83 (GD), S87, 89–92 (NIST), 107–115 (KHGNRSISS), and S119. G79 lines the anthranilate pocket. S91 provides a ligand contact to Mg(2+). N110 contributes to the anthranilate binding site. Position 165 (R165) interacts with anthranilate. Mg(2+) is bound by residues D224 and E225.

Belongs to the anthranilate phosphoribosyltransferase family. Homodimer. The cofactor is Mg(2+).

The enzyme catalyses N-(5-phospho-beta-D-ribosyl)anthranilate + diphosphate = 5-phospho-alpha-D-ribose 1-diphosphate + anthranilate. The protein operates within amino-acid biosynthesis; L-tryptophan biosynthesis; L-tryptophan from chorismate: step 2/5. Catalyzes the transfer of the phosphoribosyl group of 5-phosphorylribose-1-pyrophosphate (PRPP) to anthranilate to yield N-(5'-phosphoribosyl)-anthranilate (PRA). The sequence is that of Anthranilate phosphoribosyltransferase from Streptococcus sanguinis (strain SK36).